The chain runs to 303 residues: UDP-3-O-acyl-N-acetylglucosamine deacetylase (303 aa).

Zn(2+) contacts are provided by His-78, His-237, and Asp-241. The active-site Proton donor is His-264.

This sequence belongs to the LpxC family. The cofactor is Zn(2+).

The catalysed reaction is a UDP-3-O-[(3R)-3-hydroxyacyl]-N-acetyl-alpha-D-glucosamine + H2O = a UDP-3-O-[(3R)-3-hydroxyacyl]-alpha-D-glucosamine + acetate. The protein operates within glycolipid biosynthesis; lipid IV(A) biosynthesis; lipid IV(A) from (3R)-3-hydroxytetradecanoyl-[acyl-carrier-protein] and UDP-N-acetyl-alpha-D-glucosamine: step 2/6. In terms of biological role, catalyzes the hydrolysis of UDP-3-O-myristoyl-N-acetylglucosamine to form UDP-3-O-myristoylglucosamine and acetate, the committed step in lipid A biosynthesis. The chain is UDP-3-O-acyl-N-acetylglucosamine deacetylase from Chromohalobacter salexigens (strain ATCC BAA-138 / DSM 3043 / CIP 106854 / NCIMB 13768 / 1H11).